Here is a 246-residue protein sequence, read N- to C-terminus: 1-(5-phosphoribosyl)-5-[(5-phosphoribosylamino)methylideneamino] imidazole-4-carboxamide isomerase (246 aa).

Aspartate 8 functions as the Proton acceptor in the catalytic mechanism. The Proton donor role is filled by aspartate 131.

This sequence belongs to the HisA/HisF family.

It is found in the cytoplasm. The catalysed reaction is 1-(5-phospho-beta-D-ribosyl)-5-[(5-phospho-beta-D-ribosylamino)methylideneamino]imidazole-4-carboxamide = 5-[(5-phospho-1-deoxy-D-ribulos-1-ylimino)methylamino]-1-(5-phospho-beta-D-ribosyl)imidazole-4-carboxamide. The protein operates within amino-acid biosynthesis; L-histidine biosynthesis; L-histidine from 5-phospho-alpha-D-ribose 1-diphosphate: step 4/9. The protein is 1-(5-phosphoribosyl)-5-[(5-phosphoribosylamino)methylideneamino] imidazole-4-carboxamide isomerase of Polaromonas naphthalenivorans (strain CJ2).